The following is a 120-amino-acid chain: Crustacean hyperglycemic hormones 1 (120 aa).

Positions 1–27 (MTAFRMVWSMLLASLLMLLVASSTAPA) are cleaved as a signal peptide. 3 cysteine pairs are disulfide-bonded: Cys53-Cys89, Cys69-Cys85, and Cys72-Cys98. A Valine amide modification is found at Val118.

It belongs to the arthropod CHH/MIH/GIH/VIH hormone family.

Its subcellular location is the secreted. Functionally, hormone found in the sinus gland of isopods and decapods which controls the blood sugar level. Has a secretagogue action over the amylase released from the midgut gland. May act as a stress hormone and may be involved in the control of molting and reproduction. The polypeptide is Crustacean hyperglycemic hormones 1 (CHH1) (Penaeus monodon (Giant tiger prawn)).